Consider the following 150-residue polypeptide: Aspartate 1-decarboxylase (150 aa).

S25 serves as the catalytic Schiff-base intermediate with substrate; via pyruvic acid. Pyruvic acid (Ser) is present on S25. T57 contributes to the substrate binding site. Y58 serves as the catalytic Proton donor. G73–A75 contributes to the substrate binding site.

It belongs to the PanD family. Heterooctamer of four alpha and four beta subunits. Pyruvate is required as a cofactor. Post-translationally, is synthesized initially as an inactive proenzyme, which is activated by self-cleavage at a specific serine bond to produce a beta-subunit with a hydroxyl group at its C-terminus and an alpha-subunit with a pyruvoyl group at its N-terminus.

The protein localises to the cytoplasm. It catalyses the reaction L-aspartate + H(+) = beta-alanine + CO2. It participates in cofactor biosynthesis; (R)-pantothenate biosynthesis; beta-alanine from L-aspartate: step 1/1. In terms of biological role, catalyzes the pyruvoyl-dependent decarboxylation of aspartate to produce beta-alanine. This is Aspartate 1-decarboxylase from Kocuria rhizophila (strain ATCC 9341 / DSM 348 / NBRC 103217 / DC2201).